A 273-amino-acid polypeptide reads, in one-letter code: 2,3,4,5-tetrahydropyridine-2,6-dicarboxylate N-succinyltransferase (273 aa).

Arginine 104 and aspartate 141 together coordinate substrate.

It belongs to the transferase hexapeptide repeat family. In terms of assembly, homotrimer.

Its subcellular location is the cytoplasm. It carries out the reaction (S)-2,3,4,5-tetrahydrodipicolinate + succinyl-CoA + H2O = (S)-2-succinylamino-6-oxoheptanedioate + CoA. The protein operates within amino-acid biosynthesis; L-lysine biosynthesis via DAP pathway; LL-2,6-diaminopimelate from (S)-tetrahydrodipicolinate (succinylase route): step 1/3. This Neisseria gonorrhoeae (strain ATCC 700825 / FA 1090) protein is 2,3,4,5-tetrahydropyridine-2,6-dicarboxylate N-succinyltransferase.